The following is a 538-amino-acid chain: MDRAKFIFVTGGVLSSLGKGISSSSIATLLQHCNYQVSILKIDPYINIDPGTMSPLEHGEVFVTSDGAETDLDIGHYERFLNRNLTRLNNFTTGQIFSSVIENERKGEYLGKTIQIVPHVTDEIKRRIKSAAKGLDFLIVEVGGTVGDMEGMFYLEAIRQLKLELGNEKVINVHVTLIPYIQTTNELKTKPTQHSVQELRRLGVTPQIILARSPKPLDKELKNKIALSCDVEQDSVIVATDTKSIYACPILFLQEGILTPIARRFNLNKLHPKMAAWNTLVEKIIAPKHKVKIGFVGKYLSLKESYKSLIEALIHAGAHLDAQVNIEWLDSENFNEKTDLEGVDAILVPGGFGERGIEGKICAIQRARLEKLPFLGICLGMQLAIVEFCRNVLGLKGANSTEFNQRCEYPVVYLIGDFMDQNHQKQVRTYNSPLGGTMRLGEYECEIMPNSLLEKAYKKPSIKERHRHRYEINPKYRQEWESKGLKVVGFGANHLIEAIELEDHPFFVGVQFHPEFTSRLQSPNPIILDFIKSALSKS.

An amidoligase domain region spans residues 1–267 (MDRAKFIFVT…LTPIARRFNL (267 aa)). Serine 15 is a binding site for CTP. UTP is bound at residue serine 15. ATP contacts are provided by residues 16 to 21 (SLGKGI) and aspartate 73. Residues aspartate 73 and glutamate 141 each coordinate Mg(2+). CTP is bound by residues 148-150 (DME), 188-193 (KTKPTQ), and lysine 224. UTP contacts are provided by residues 188 to 193 (KTKPTQ) and lysine 224. Residues 292–538 (KIGFVGKYLS…DFIKSALSKS (247 aa)) enclose the Glutamine amidotransferase type-1 domain. An L-glutamine-binding site is contributed by glycine 351. The Nucleophile; for glutamine hydrolysis role is filled by cysteine 378. L-glutamine contacts are provided by residues 379–382 (LGMQ), glutamate 402, and arginine 469. Catalysis depends on residues histidine 513 and glutamate 515.

It belongs to the CTP synthase family. As to quaternary structure, homotetramer.

It catalyses the reaction UTP + L-glutamine + ATP + H2O = CTP + L-glutamate + ADP + phosphate + 2 H(+). It carries out the reaction L-glutamine + H2O = L-glutamate + NH4(+). The catalysed reaction is UTP + NH4(+) + ATP = CTP + ADP + phosphate + 2 H(+). Its pathway is pyrimidine metabolism; CTP biosynthesis via de novo pathway; CTP from UDP: step 2/2. Allosterically activated by GTP, when glutamine is the substrate; GTP has no effect on the reaction when ammonia is the substrate. The allosteric effector GTP functions by stabilizing the protein conformation that binds the tetrahedral intermediate(s) formed during glutamine hydrolysis. Inhibited by the product CTP, via allosteric rather than competitive inhibition. In terms of biological role, catalyzes the ATP-dependent amination of UTP to CTP with either L-glutamine or ammonia as the source of nitrogen. Regulates intracellular CTP levels through interactions with the four ribonucleotide triphosphates. The chain is CTP synthase from Helicobacter pylori (strain HPAG1).